A 382-amino-acid polypeptide reads, in one-letter code: MGMLKIGKNCSVCKEWQEHCYWSHMADDCKHFLTYMVGDFTESMIVPSRFANNFNGHISEVVNLKSPSGKTWSIGVAYSDTGELVLRSGWKEFVDANGVQENDCLLFRYSGVSSFDVLIFDPSGCEKASPHFVENRGFGREEKSAGAEGGGRDGDKNGHHQHQLEMTPHKNSSRCRSIPSACKRGLFSDEIEQDHREEKKEGDDEDEDEDEDEDVDKDGEDRYYFCRHGGRVTEYNLSKGDKEEISRVPVPVEPGNPVLVKVIHASHLLSSRYSTVGVSPEFAGRYLGPAMAREVVMERGGGGGGGDQWHVRFVRRESSRGFHGTGWRRFARDNGLLAHDVCLFELRLVDGAGAGDRLRRRPRPTMAVHVLRRVRGRFVLIR.

A DNA-binding region (TF-B3 1) is located at residues 29–123; sequence CKHFLTYMVG…SFDVLIFDPS (95 aa). 2 stretches are compositionally biased toward basic and acidic residues: residues 136–158 and 193–202; these read RGFGREEKSAGAEGGGRDGDKNG and QDHREEKKEG. The disordered stretch occupies residues 136 to 222; sequence RGFGREEKSA…EDVDKDGEDR (87 aa). Acidic residues predominate over residues 203-218; that stretch reads DDEDEDEDEDEDVDKD. The TF-B3 2 DNA-binding region spans 261-363; that stretch reads KVIHASHLLS…AGDRLRRRPR (103 aa).

Its subcellular location is the nucleus. In Oryza sativa subsp. japonica (Rice), this protein is B3 domain-containing protein Os03g0622100.